The primary structure comprises 121 residues: Putative membrane protein insertion efficiency factor (121 aa).

A disordered region spans residues 97 to 121 (VPARRDRHAGGRRCCPANVDEQRST).

The protein belongs to the UPF0161 family.

It is found in the cell membrane. Its function is as follows. Could be involved in insertion of integral membrane proteins into the membrane. This chain is Putative membrane protein insertion efficiency factor, found in Rhodococcus jostii (strain RHA1).